The following is a 493-amino-acid chain: UDP-N-acetylmuramoyl-L-alanyl-D-glutamate--2,6-diaminopimelate ligase (493 aa).

Ser-31 serves as a coordination point for UDP-N-acetyl-alpha-D-muramoyl-L-alanyl-D-glutamate. 111–117 (GTNGKTT) lines the ATP pocket. UDP-N-acetyl-alpha-D-muramoyl-L-alanyl-D-glutamate-binding positions include Asn-152, 153–154 (TT), Ser-180, and Arg-188. Lys-220 bears the N6-carboxylysine mark. Meso-2,6-diaminopimelate is bound by residues Arg-386, 410–413 (DNPR), Gly-462, and Glu-466. The Meso-diaminopimelate recognition motif signature appears at 410–413 (DNPR).

This sequence belongs to the MurCDEF family. MurE subfamily. The cofactor is Mg(2+). Carboxylation is probably crucial for Mg(2+) binding and, consequently, for the gamma-phosphate positioning of ATP.

It localises to the cytoplasm. The enzyme catalyses UDP-N-acetyl-alpha-D-muramoyl-L-alanyl-D-glutamate + meso-2,6-diaminopimelate + ATP = UDP-N-acetyl-alpha-D-muramoyl-L-alanyl-gamma-D-glutamyl-meso-2,6-diaminopimelate + ADP + phosphate + H(+). The protein operates within cell wall biogenesis; peptidoglycan biosynthesis. Its function is as follows. Catalyzes the addition of meso-diaminopimelic acid to the nucleotide precursor UDP-N-acetylmuramoyl-L-alanyl-D-glutamate (UMAG) in the biosynthesis of bacterial cell-wall peptidoglycan. The sequence is that of UDP-N-acetylmuramoyl-L-alanyl-D-glutamate--2,6-diaminopimelate ligase (murE1) from Oceanobacillus iheyensis (strain DSM 14371 / CIP 107618 / JCM 11309 / KCTC 3954 / HTE831).